The sequence spans 381 residues: Succinyl-diaminopimelate desuccinylase (381 aa).

His-68 serves as a coordination point for Zn(2+). Asp-70 is a catalytic residue. Asp-101 contributes to the Zn(2+) binding site. Glu-135 serves as the catalytic Proton acceptor. 3 residues coordinate Zn(2+): Glu-136, Glu-164, and His-350.

The protein belongs to the peptidase M20A family. DapE subfamily. As to quaternary structure, homodimer. The cofactor is Zn(2+). Co(2+) is required as a cofactor.

The catalysed reaction is N-succinyl-(2S,6S)-2,6-diaminopimelate + H2O = (2S,6S)-2,6-diaminopimelate + succinate. Its pathway is amino-acid biosynthesis; L-lysine biosynthesis via DAP pathway; LL-2,6-diaminopimelate from (S)-tetrahydrodipicolinate (succinylase route): step 3/3. Catalyzes the hydrolysis of N-succinyl-L,L-diaminopimelic acid (SDAP), forming succinate and LL-2,6-diaminopimelate (DAP), an intermediate involved in the bacterial biosynthesis of lysine and meso-diaminopimelic acid, an essential component of bacterial cell walls. In Neisseria meningitidis serogroup C / serotype 2a (strain ATCC 700532 / DSM 15464 / FAM18), this protein is Succinyl-diaminopimelate desuccinylase.